A 3032-amino-acid polypeptide reads, in one-letter code: Compactin nonaketide synthase, polyketide synthase component (3032 aa).

One can recognise a Ketosynthase family 3 (KS3) domain in the interval 8-447; it reads NEPIVVVGSG…GTNAHAIIEE (440 aa). Residues Cys181, His320, and His367 each act as for beta-ketoacyl synthase activity in the active site. Residues 560 to 901 form an acyl and malonyl transferase region; that stretch reads VFTGQGAQWP…GYIWERFGVR (342 aa). Ser654 acts as the For malonyltransferase activity in catalysis. An N-terminal hotdog fold region spans residues 953-1089; sequence HLLLGKLSSY…GQIVITLGEA (137 aa). The 309-residue stretch at 953–1261 folds into the PKS/mFAS DH domain; it reads HLLLGKLSSY…FKPFSPPTAS (309 aa). His985 acts as the Proton acceptor; for dehydratase activity in catalysis. Positions 985–997 are dehydratase-like; the sequence is HALQGQTVFPAAG. Residues 1106–1261 are C-terminal hotdog fold; the sequence is MNNVNIDFFY…FKPFSPPTAS (156 aa). Asp1168 serves as the catalytic Proton donor; for dehydratase activity. Residues 1506 to 1544 are methyltransferase; it reads YDLIIASDVLHASSNFEEKLAHIRSLLKPGGHLVTFGVT. The Carrier domain occupies 2441 to 2520; the sequence is DQVRQIVIDG…DLADDAATRL (80 aa). O-(pantetheine 4'-phosphoryl)serine is present on Ser2480. The disordered stretch occupies residues 2531 to 2580; the sequence is IGDSTGTSDSGASPTPTDSHDEASSATSTDASSAEEDEEQEDDNEQGGRK. A compositionally biased stretch (low complexity) spans 2532–2547; the sequence is GDSTGTSDSGASPTPT. Residues 2563–2575 show a composition bias toward acidic residues; it reads SAEEDEEQEDDNE. Positions 2586-2946 are peptide synthetase elongation; sequence RLSLGQEYSW…PKTQTHAPLF (361 aa).

It depends on pantetheine 4'-phosphate as a cofactor.

The enzyme catalyses holo-[compactin nonaketide synthase] + 9 malonyl-CoA + 11 NADPH + 20 H(+) = dihydro-ML-236C-[compactin nonaketide synthase] + 9 CO2 + 11 NADP(+) + 9 CoA + 6 H2O. It functions in the pathway polyketide biosynthesis. In terms of biological role, nonaketide synthase; part of the gene cluster that mediates the biosynthesis of compactin, also known as mevastatin or ML-236B, and which acts as a potent competitive inhibitor of HMG-CoA reductase. Compactin biosynthesis is performed in two stages. The first stage is catalyzed by the nonaketide synthase mlcA, which belongs to type I polyketide synthases and catalyzes the iterative nine-step formation of the polyketide. This PKS stage is completed by the action of dehydrogenase mlcG, which catalyzes the NADPH-dependent reduction of the unsaturated tetra-, penta- and heptaketide intermediates that arise during the mlcA-mediated biosynthesis of the nonaketide chain and leads to dihydro-ML-236C carboxylate. Covalently bound dihydro-ML-236C carboxylate is released from mlcA by the mlcF esterase. Conversion of dihydro-ML-236C carboxylate into ML-236A carboxylate is subsequently performed with the participation of molecular oxygen and P450 monoogygenase mlcC. Finally, mlcH performs the conversion of ML-236A carboxylate to ML-236B/compactin carboxylate through the addition of the side-chain diketide moiety produced by the diketide synthase mlcB. This chain is Compactin nonaketide synthase, polyketide synthase component, found in Penicillium citrinum.